Here is a 269-residue protein sequence, read N- to C-terminus: Histone deacetylase HDT1 (269 aa).

A disordered region spans residues 97–269 (PFEEEEDDED…HSKAKHSAGK (173 aa)). 2 stretches are compositionally biased toward acidic residues: residues 98–115 (FEEEEDDEDDYDESDEDI) and 153–179 (KDDEDESSDDDDSDMGEDEDDSDDSEE). Over residues 228-238 (PSKQASKTPKS) the composition is skewed to polar residues. The C2H2-type zinc-finger motif lies at 242-265 (HHCKPCNRSFGSEGALDSHSKAKH).

This sequence belongs to the histone deacetylase HD2 family. Predominantly expressed in ovaries. Accumulates predominantly in the micropylar region of the ovule's integument.

It localises to the nucleus. Its subcellular location is the nucleolus. In terms of biological role, mediates the deacetylation of lysine residues on the N-terminal part of the core histones (H2A, H2B, H3 and H4). Histone deacetylation gives a tag for epigenetic repression and plays an important role in transcriptional regulation, cell cycle progression and developmental events. This chain is Histone deacetylase HDT1 (HDT1), found in Solanum chacoense (Chaco potato).